A 214-amino-acid chain; its full sequence is MIEPLHTAPPLLAAHDLAFSRNEEPVFGPLDFHVDAGEALLVQGDNGAGKTTLLRVLAGLLHVERGQIQIDGKSAKRGDRSRFMAYLGHLPGLKADLSTLENLHFLCGLHGRRAKQMPGSALAIVGLAGYEDALVRQLSAGQRKRLALARLWLSPAPLWLLDEPYANLDLDGITLVNRMISAHLRGGGAALVTTHGAYAAPPVRTRMLTLEVAA.

In terms of domain architecture, ABC transporter spans 12–214; the sequence is LAAHDLAFSR…TRMLTLEVAA (203 aa). 44–51 is a binding site for ATP; it reads GDNGAGKT.

The protein belongs to the ABC transporter superfamily. CcmA exporter (TC 3.A.1.107) family. In terms of assembly, the complex is composed of two ATP-binding proteins (CcmA) and two transmembrane proteins (CcmB).

The protein localises to the cell inner membrane. It catalyses the reaction heme b(in) + ATP + H2O = heme b(out) + ADP + phosphate + H(+). Functionally, part of the ABC transporter complex CcmAB involved in the biogenesis of c-type cytochromes; once thought to export heme, this seems not to be the case, but its exact role is uncertain. Responsible for energy coupling to the transport system. The sequence is that of Cytochrome c biogenesis ATP-binding export protein CcmA from Xanthomonas axonopodis pv. citri (strain 306).